Reading from the N-terminus, the 65-residue chain is SCOCO-like protein 1 (65 aa).

A coiled-coil region spans residues arginine 8 to glutamate 44.

It belongs to the SLO1 family.

This Schizosaccharomyces pombe (strain 972 / ATCC 24843) (Fission yeast) protein is SCOCO-like protein 1.